The primary structure comprises 459 residues: Cysteine--tRNA ligase (459 aa).

Cysteine 28 contributes to the Zn(2+) binding site. Positions 30-40 (VTVYDLCHIGH) match the 'HIGH' region motif. Residues cysteine 209, histidine 234, and glutamate 238 each coordinate Zn(2+). Positions 266–270 (KMSKS) match the 'KMSKS' region motif. Lysine 269 contacts ATP.

The protein belongs to the class-I aminoacyl-tRNA synthetase family. Monomer. Zn(2+) serves as cofactor.

Its subcellular location is the cytoplasm. It carries out the reaction tRNA(Cys) + L-cysteine + ATP = L-cysteinyl-tRNA(Cys) + AMP + diphosphate. This chain is Cysteine--tRNA ligase, found in Haemophilus influenzae (strain PittGG).